The chain runs to 598 residues: Trichothecene efflux pump TRI12 (598 aa).

Residues 42 to 62 (IVASFAAFSMNVVATYFVLQA) form a helical membrane-spanning segment. A glycan (N-linked (GlcNAc...) asparagine) is linked at asparagine 79. Transmembrane regions (helical) follow at residues 109–129 (PFVILTHILGLVGAIVGCTAT) and 135–155 (LAAMTMLGVAAGPAGASPLFI). N-linked (GlcNAc...) asparagine glycosylation occurs at asparagine 161. 10 consecutive transmembrane segments (helical) span residues 165–185 (FLGLLIVSAPVVATNGLSPYL), 197–217 (WIFYIYIIMSTIAVTLIIIWY), 241–261 (WIGIILVIAGTSLFLLGVSWG), 273–293 (VIGLISSGAGTLVIFALYEVY), 312–332 (FVCILIISSIMGSMHLSLVIM), 356–376 (ATASFGTGAGVVVLGSLFHLV), 381–401 (WQILVGAMWLTAFLGAMSSIN), 409–429 (IALSVMTGFVVAWAQDITMLL), 442–462 (AFAVVAAARPFAGSIFTAAFI), and 533–553 (ANVYYFAMALGVIPIIASLCM). A disordered region spans residues 579-598 (LEGNSESQPSPIILSMADKE).

It belongs to the major facilitator superfamily.

Its subcellular location is the cell membrane. Functionally, efflux pump that provides the dual role of trichothecene export and self-protection by allowing the fungus to evade the harmful effect of its own trichothecene production. This is Trichothecene efflux pump TRI12 from Fusarium sporotrichioides.